The sequence spans 103 residues: Small ribosomal subunit protein uS10 (103 aa).

This sequence belongs to the universal ribosomal protein uS10 family. Part of the 30S ribosomal subunit.

Involved in the binding of tRNA to the ribosomes. The chain is Small ribosomal subunit protein uS10 from Stutzerimonas stutzeri (strain A1501) (Pseudomonas stutzeri).